The sequence spans 261 residues: Spermatogenesis-associated protein 46 (261 aa).

The interval 140-159 (SSSSSPENTCPREATKKSRH) is disordered.

In terms of tissue distribution, testis-specific.

The protein resides in the nucleus membrane. Functionally, plays a role in spermiogenesis and fertilization. This chain is Spermatogenesis-associated protein 46, found in Homo sapiens (Human).